The sequence spans 227 residues: uncharacterized protein (227 aa).

This is an uncharacterized protein from Schizosaccharomyces pombe (strain 972 / ATCC 24843) (Fission yeast).